We begin with the raw amino-acid sequence, 211 residues long: UPF0056 membrane protein BUsg_257 (211 aa).

A run of 6 helical transmembrane segments spans residues 14–34, 54–74, 76–96, 116–136, 144–164, and 185–205; these read FFVS…FTTM, AFII…AFGI, INSF…SMIS, VVPL…TIVW, SDFL…WLCF, and IMGL…IKSI.

It belongs to the UPF0056 (MarC) family.

The protein resides in the cell membrane. In Buchnera aphidicola subsp. Schizaphis graminum (strain Sg), this protein is UPF0056 membrane protein BUsg_257.